A 274-amino-acid chain; its full sequence is NH(3)-dependent NAD(+) synthetase (274 aa).

46–53 (GISGGQDS) serves as a coordination point for ATP. Residue D52 participates in Mg(2+) binding. R140 is a deamido-NAD(+) binding site. Residue T160 coordinates ATP. E165 contributes to the Mg(2+) binding site. Deamido-NAD(+) contacts are provided by K173 and D180. ATP is bound by residues K189 and T211. 260 to 261 (HK) contributes to the deamido-NAD(+) binding site.

It belongs to the NAD synthetase family. As to quaternary structure, homodimer.

The enzyme catalyses deamido-NAD(+) + NH4(+) + ATP = AMP + diphosphate + NAD(+) + H(+). It functions in the pathway cofactor biosynthesis; NAD(+) biosynthesis; NAD(+) from deamido-NAD(+) (ammonia route): step 1/1. Functionally, catalyzes the ATP-dependent amidation of deamido-NAD to form NAD. Uses ammonia as a nitrogen source. In Streptococcus mutans serotype c (strain ATCC 700610 / UA159), this protein is NH(3)-dependent NAD(+) synthetase.